The sequence spans 386 residues: Succinyl-diaminopimelate desuccinylase (386 aa).

His76 serves as a coordination point for Zn(2+). Asp78 is a catalytic residue. Zn(2+) is bound at residue Asp110. Residue Glu144 is the Proton acceptor of the active site. The Zn(2+) site is built by Glu145, Glu173, and His359.

The protein belongs to the peptidase M20A family. DapE subfamily. As to quaternary structure, homodimer. It depends on Zn(2+) as a cofactor. The cofactor is Co(2+).

It catalyses the reaction N-succinyl-(2S,6S)-2,6-diaminopimelate + H2O = (2S,6S)-2,6-diaminopimelate + succinate. It participates in amino-acid biosynthesis; L-lysine biosynthesis via DAP pathway; LL-2,6-diaminopimelate from (S)-tetrahydrodipicolinate (succinylase route): step 3/3. Its function is as follows. Catalyzes the hydrolysis of N-succinyl-L,L-diaminopimelic acid (SDAP), forming succinate and LL-2,6-diaminopimelate (DAP), an intermediate involved in the bacterial biosynthesis of lysine and meso-diaminopimelic acid, an essential component of bacterial cell walls. This chain is Succinyl-diaminopimelate desuccinylase, found in Chromohalobacter salexigens (strain ATCC BAA-138 / DSM 3043 / CIP 106854 / NCIMB 13768 / 1H11).